The chain runs to 802 residues: Phenylalanine--tRNA ligase beta subunit (802 aa).

Positions 40-155 constitute a tRNA-binding domain; the sequence is SASLKNVVVG…AHVETGVNAI (116 aa). One can recognise a B5 domain in the interval 409–484; sequence KAVNKIETSL…RIYGYDEIPV (76 aa). Residues Asp462, Asp468, Glu471, and Glu472 each coordinate Mg(2+). An FDX-ACB domain is found at 709-802; it reads PRYPEMTRDL…LQEKLNAIIR (94 aa).

This sequence belongs to the phenylalanyl-tRNA synthetase beta subunit family. Type 1 subfamily. Tetramer of two alpha and two beta subunits. It depends on Mg(2+) as a cofactor.

Its subcellular location is the cytoplasm. The catalysed reaction is tRNA(Phe) + L-phenylalanine + ATP = L-phenylalanyl-tRNA(Phe) + AMP + diphosphate + H(+). In Listeria monocytogenes serovar 1/2a (strain ATCC BAA-679 / EGD-e), this protein is Phenylalanine--tRNA ligase beta subunit.